The sequence spans 124 residues: Small ribosomal subunit protein uS13 (124 aa).

Residues 95–124 form a disordered region; sequence GLPVRGQRTRHNARTRKGPRKTVGAKKGKR. The span at 101-124 shows a compositional bias: basic residues; it reads QRTRHNARTRKGPRKTVGAKKGKR.

This sequence belongs to the universal ribosomal protein uS13 family. Part of the 30S ribosomal subunit. Forms a loose heterodimer with protein S19. Forms two bridges to the 50S subunit in the 70S ribosome.

Functionally, located at the top of the head of the 30S subunit, it contacts several helices of the 16S rRNA. In the 70S ribosome it contacts the 23S rRNA (bridge B1a) and protein L5 of the 50S subunit (bridge B1b), connecting the 2 subunits; these bridges are implicated in subunit movement. Contacts the tRNAs in the A and P-sites. The chain is Small ribosomal subunit protein uS13 from Coprothermobacter proteolyticus (strain ATCC 35245 / DSM 5265 / OCM 4 / BT).